We begin with the raw amino-acid sequence, 407 residues long: Phosphopentomutase (407 aa).

Residues Asp-10, Asp-306, His-311, Asp-347, His-348, and His-359 each contribute to the Mn(2+) site.

Belongs to the phosphopentomutase family. Mn(2+) is required as a cofactor.

The protein localises to the cytoplasm. It carries out the reaction 2-deoxy-alpha-D-ribose 1-phosphate = 2-deoxy-D-ribose 5-phosphate. It catalyses the reaction alpha-D-ribose 1-phosphate = D-ribose 5-phosphate. It participates in carbohydrate degradation; 2-deoxy-D-ribose 1-phosphate degradation; D-glyceraldehyde 3-phosphate and acetaldehyde from 2-deoxy-alpha-D-ribose 1-phosphate: step 1/2. In terms of biological role, isomerase that catalyzes the conversion of deoxy-ribose 1-phosphate (dRib-1-P) and ribose 1-phosphate (Rib-1-P) to deoxy-ribose 5-phosphate (dRib-5-P) and ribose 5-phosphate (Rib-5-P), respectively. In Shigella dysenteriae serotype 1 (strain Sd197), this protein is Phosphopentomutase.